The primary structure comprises 245 residues: Ubiquinone biosynthesis O-methyltransferase (245 aa).

Positions 44, 64, 85, and 129 each coordinate S-adenosyl-L-methionine.

Belongs to the methyltransferase superfamily. UbiG/COQ3 family.

It catalyses the reaction a 3-demethylubiquinol + S-adenosyl-L-methionine = a ubiquinol + S-adenosyl-L-homocysteine + H(+). It carries out the reaction a 3-(all-trans-polyprenyl)benzene-1,2-diol + S-adenosyl-L-methionine = a 2-methoxy-6-(all-trans-polyprenyl)phenol + S-adenosyl-L-homocysteine + H(+). Its pathway is cofactor biosynthesis; ubiquinone biosynthesis. Its function is as follows. O-methyltransferase that catalyzes the 2 O-methylation steps in the ubiquinone biosynthetic pathway. This Proteus mirabilis (strain HI4320) protein is Ubiquinone biosynthesis O-methyltransferase.